The primary structure comprises 230 residues: Leucyl/phenylalanyl-tRNA--protein transferase (230 aa).

This sequence belongs to the L/F-transferase family.

It is found in the cytoplasm. The enzyme catalyses N-terminal L-lysyl-[protein] + L-leucyl-tRNA(Leu) = N-terminal L-leucyl-L-lysyl-[protein] + tRNA(Leu) + H(+). It carries out the reaction N-terminal L-arginyl-[protein] + L-leucyl-tRNA(Leu) = N-terminal L-leucyl-L-arginyl-[protein] + tRNA(Leu) + H(+). It catalyses the reaction L-phenylalanyl-tRNA(Phe) + an N-terminal L-alpha-aminoacyl-[protein] = an N-terminal L-phenylalanyl-L-alpha-aminoacyl-[protein] + tRNA(Phe). In terms of biological role, functions in the N-end rule pathway of protein degradation where it conjugates Leu, Phe and, less efficiently, Met from aminoacyl-tRNAs to the N-termini of proteins containing an N-terminal arginine or lysine. In Proteus mirabilis (strain HI4320), this protein is Leucyl/phenylalanyl-tRNA--protein transferase.